Consider the following 207-residue polypeptide: Thiamine-phosphate synthase (207 aa).

4-amino-2-methyl-5-(diphosphooxymethyl)pyrimidine-binding positions include 36–40 and Asn-68; that span reads QLRMK. Mg(2+) is bound by residues Asp-69 and Asp-88. Ser-106 serves as a coordination point for 4-amino-2-methyl-5-(diphosphooxymethyl)pyrimidine. A 2-[(2R,5Z)-2-carboxy-4-methylthiazol-5(2H)-ylidene]ethyl phosphate-binding site is contributed by 132-134; the sequence is TNT. 4-amino-2-methyl-5-(diphosphooxymethyl)pyrimidine is bound at residue Lys-135. Residues Gly-162 and 182–183 each bind 2-[(2R,5Z)-2-carboxy-4-methylthiazol-5(2H)-ylidene]ethyl phosphate; that span reads VS.

Belongs to the thiamine-phosphate synthase family. Mg(2+) is required as a cofactor.

The enzyme catalyses 2-[(2R,5Z)-2-carboxy-4-methylthiazol-5(2H)-ylidene]ethyl phosphate + 4-amino-2-methyl-5-(diphosphooxymethyl)pyrimidine + 2 H(+) = thiamine phosphate + CO2 + diphosphate. The catalysed reaction is 2-(2-carboxy-4-methylthiazol-5-yl)ethyl phosphate + 4-amino-2-methyl-5-(diphosphooxymethyl)pyrimidine + 2 H(+) = thiamine phosphate + CO2 + diphosphate. It catalyses the reaction 4-methyl-5-(2-phosphooxyethyl)-thiazole + 4-amino-2-methyl-5-(diphosphooxymethyl)pyrimidine + H(+) = thiamine phosphate + diphosphate. The protein operates within cofactor biosynthesis; thiamine diphosphate biosynthesis; thiamine phosphate from 4-amino-2-methyl-5-diphosphomethylpyrimidine and 4-methyl-5-(2-phosphoethyl)-thiazole: step 1/1. Condenses 4-methyl-5-(beta-hydroxyethyl)thiazole monophosphate (THZ-P) and 2-methyl-4-amino-5-hydroxymethyl pyrimidine pyrophosphate (HMP-PP) to form thiamine monophosphate (TMP). This Methanococcus maripaludis (strain C7 / ATCC BAA-1331) protein is Thiamine-phosphate synthase.